Consider the following 639-residue polypeptide: E3 ubiquitin-protein ligase RNF12 (639 aa).

3 disordered regions span residues 1 to 28 (MESA…RLDR), 67 to 403 (RLQQ…ESER), and 467 to 534 (NDTD…GGVT). Positions 11 to 21 (STEQSESQRQS) are enriched in low complexity. Polar residues-rich tracts occupy residues 110–138 (SVRQ…NPNS) and 147–166 (INVN…QSSE). The segment covering 213 to 228 (RSPDQRRTRARTDRSR) has biased composition (basic and acidic residues). The segment covering 244-253 (HSSSQTVDAS) has biased composition (polar residues). The span at 269-286 (SSQMQNSSSSNETEGSSR) shows a compositional bias: low complexity. The span at 290-302 (HITARQQALGTEG) shows a compositional bias: polar residues. 2 stretches are compositionally biased toward low complexity: residues 303–327 (QSQS…SQST) and 335–348 (SRSS…DSSS). Positions 349–358 (NAETTGTGQR) are enriched in polar residues. The segment covering 372-382 (RPGDYRQRDSI) has biased composition (basic and acidic residues). The segment covering 383-399 (ANRTRSRSQTPNNTVTY) has biased composition (polar residues). Pro residues-rich tracts occupy residues 473–482 (NPTPVSPPAA) and 493–506 (PEPP…PEPV). The segment at 585 to 626 (CSVCITEYTEGNKLRKLPCSHEYHVHCIDRWLSENSTCPICR) adopts an RING-type; atypical zinc-finger fold. The PDZ-binding signature appears at 636–639 (ESIV).

It belongs to the RNF12 family. In terms of assembly, forms homodimers through the C-terminal region. The N-terminus interacts with the homeobox of LIM/homeobox factor lhx1/lim1, with lhx3/lim3 and lhx5/lim5, and with the N-terminus of ldb1.

The protein resides in the nucleus. The catalysed reaction is S-ubiquitinyl-[E2 ubiquitin-conjugating enzyme]-L-cysteine + [acceptor protein]-L-lysine = [E2 ubiquitin-conjugating enzyme]-L-cysteine + N(6)-ubiquitinyl-[acceptor protein]-L-lysine.. It functions in the pathway protein modification; protein ubiquitination. In terms of biological role, acts as an E3 ubiquitin-protein ligase specific for ldb1, mediating ubiquitination and proteasome-dependent degradation of excess ldb1 in a RING-dependent manner. Does not degrade ldb1 bound to lhx1/lim1, nor lim1 itself and thus contributes to the establishment of proper ldb1-lhx1/lim1 stoichiometry and the formation of a ldb1-lhx1/lim1 complex. Interferes with Spemann organizer function and suppresses secondary axis formation induced by ldb1 and lhx1/lim1. The sequence is that of E3 ubiquitin-protein ligase RNF12 from Xenopus tropicalis (Western clawed frog).